We begin with the raw amino-acid sequence, 251 residues long: Imidazole glycerol phosphate synthase subunit HisF (251 aa).

Residues Asp-11 and Asp-130 contribute to the active site.

Belongs to the HisA/HisF family. Heterodimer of HisH and HisF.

The protein resides in the cytoplasm. It catalyses the reaction 5-[(5-phospho-1-deoxy-D-ribulos-1-ylimino)methylamino]-1-(5-phospho-beta-D-ribosyl)imidazole-4-carboxamide + L-glutamine = D-erythro-1-(imidazol-4-yl)glycerol 3-phosphate + 5-amino-1-(5-phospho-beta-D-ribosyl)imidazole-4-carboxamide + L-glutamate + H(+). It functions in the pathway amino-acid biosynthesis; L-histidine biosynthesis; L-histidine from 5-phospho-alpha-D-ribose 1-diphosphate: step 5/9. Its function is as follows. IGPS catalyzes the conversion of PRFAR and glutamine to IGP, AICAR and glutamate. The HisF subunit catalyzes the cyclization activity that produces IGP and AICAR from PRFAR using the ammonia provided by the HisH subunit. This chain is Imidazole glycerol phosphate synthase subunit HisF, found in Flavobacterium johnsoniae (strain ATCC 17061 / DSM 2064 / JCM 8514 / BCRC 14874 / CCUG 350202 / NBRC 14942 / NCIMB 11054 / UW101) (Cytophaga johnsonae).